The following is a 311-amino-acid chain: tRNA-cytidine(32) 2-sulfurtransferase (311 aa).

Positions 47-52 (SGGKDS) match the PP-loop motif motif. Residues Cys-122, Cys-125, and Cys-213 each contribute to the [4Fe-4S] cluster site.

This sequence belongs to the TtcA family. In terms of assembly, homodimer. Mg(2+) is required as a cofactor. The cofactor is [4Fe-4S] cluster.

Its subcellular location is the cytoplasm. The catalysed reaction is cytidine(32) in tRNA + S-sulfanyl-L-cysteinyl-[cysteine desulfurase] + AH2 + ATP = 2-thiocytidine(32) in tRNA + L-cysteinyl-[cysteine desulfurase] + A + AMP + diphosphate + H(+). It functions in the pathway tRNA modification. Catalyzes the ATP-dependent 2-thiolation of cytidine in position 32 of tRNA, to form 2-thiocytidine (s(2)C32). The sulfur atoms are provided by the cysteine/cysteine desulfurase (IscS) system. The polypeptide is tRNA-cytidine(32) 2-sulfurtransferase (Escherichia coli O139:H28 (strain E24377A / ETEC)).